Reading from the N-terminus, the 283-residue chain is Pantothenate synthetase (283 aa).

ATP is bound at residue 30-37 (MGALHEGH). The active-site Proton donor is the H37. Residue Q61 coordinates (R)-pantoate. Q61 serves as a coordination point for beta-alanine. Residue 150-153 (GRKD) participates in ATP binding. Q156 lines the (R)-pantoate pocket. ATP-binding positions include V179 and 187–190 (MSSR).

It belongs to the pantothenate synthetase family. Homodimer.

It localises to the cytoplasm. It carries out the reaction (R)-pantoate + beta-alanine + ATP = (R)-pantothenate + AMP + diphosphate + H(+). It functions in the pathway cofactor biosynthesis; (R)-pantothenate biosynthesis; (R)-pantothenate from (R)-pantoate and beta-alanine: step 1/1. Functionally, catalyzes the condensation of pantoate with beta-alanine in an ATP-dependent reaction via a pantoyl-adenylate intermediate. This chain is Pantothenate synthetase, found in Rhodopirellula baltica (strain DSM 10527 / NCIMB 13988 / SH1).